A 199-amino-acid chain; its full sequence is Superoxide dismutase [Mn/Fe] 2 (199 aa).

H27, H81, D161, and H165 together coordinate Fe(3+). 4 residues coordinate Mn(2+): H27, H81, D161, and H165.

The protein belongs to the iron/manganese superoxide dismutase family. In terms of assembly, homodimer. Can also form a heterodimer with SodA. Requires Mn(2+) as cofactor. The cofactor is Fe(3+).

The catalysed reaction is 2 superoxide + 2 H(+) = H2O2 + O2. Its function is as follows. Destroys superoxide anion radicals which are normally produced within the cells and which are toxic to biological systems. Catalyzes the dismutation of superoxide anion radicals into O2 and H2O2 by successive reduction and oxidation of the transition metal ion at the active site. The polypeptide is Superoxide dismutase [Mn/Fe] 2 (sodM) (Staphylococcus aureus (strain USA300)).